The sequence spans 109 residues: Small ribosomal subunit protein uS17 (109 aa).

This sequence belongs to the universal ribosomal protein uS17 family. Part of the 30S ribosomal subunit.

In terms of biological role, one of the primary rRNA binding proteins, it binds specifically to the 5'-end of 16S ribosomal RNA. In Thermoplasma acidophilum (strain ATCC 25905 / DSM 1728 / JCM 9062 / NBRC 15155 / AMRC-C165), this protein is Small ribosomal subunit protein uS17.